The following is a 73-amino-acid chain: Translation initiation factor IF-1 (73 aa).

An S1-like domain is found at M1–Q72.

It belongs to the IF-1 family. As to quaternary structure, component of the 30S ribosomal translation pre-initiation complex which assembles on the 30S ribosome in the order IF-2 and IF-3, IF-1 and N-formylmethionyl-tRNA(fMet); mRNA recruitment can occur at any time during PIC assembly.

The protein resides in the cytoplasm. Its function is as follows. One of the essential components for the initiation of protein synthesis. Stabilizes the binding of IF-2 and IF-3 on the 30S subunit to which N-formylmethionyl-tRNA(fMet) subsequently binds. Helps modulate mRNA selection, yielding the 30S pre-initiation complex (PIC). Upon addition of the 50S ribosomal subunit IF-1, IF-2 and IF-3 are released leaving the mature 70S translation initiation complex. The protein is Translation initiation factor IF-1 of Rickettsia bellii (strain OSU 85-389).